We begin with the raw amino-acid sequence, 218 residues long: Ribose-5-phosphate isomerase A (218 aa).

Residues 28–31 (TGST), 81–84 (DGAD), and 94–97 (KGGG) contribute to the substrate site. Catalysis depends on E103, which acts as the Proton acceptor. A substrate-binding site is contributed by K121.

Belongs to the ribose 5-phosphate isomerase family. As to quaternary structure, homodimer.

It catalyses the reaction aldehydo-D-ribose 5-phosphate = D-ribulose 5-phosphate. Its pathway is carbohydrate degradation; pentose phosphate pathway; D-ribose 5-phosphate from D-ribulose 5-phosphate (non-oxidative stage): step 1/1. Functionally, catalyzes the reversible conversion of ribose-5-phosphate to ribulose 5-phosphate. This Yersinia pseudotuberculosis serotype IB (strain PB1/+) protein is Ribose-5-phosphate isomerase A.